The sequence spans 242 residues: 7-cyano-7-deazaguanine synthase (242 aa).

The interval 1–22 (MNSSSNEKNKDLNRKNFSSKTD) is disordered. ATP is bound at residue 32–42 (LSGGLDSTTCL). Residues Cys212, Cys221, Cys224, and Cys227 each coordinate Zn(2+).

This sequence belongs to the QueC family. Requires Zn(2+) as cofactor.

It carries out the reaction 7-carboxy-7-deazaguanine + NH4(+) + ATP = 7-cyano-7-deazaguanine + ADP + phosphate + H2O + H(+). It participates in purine metabolism; 7-cyano-7-deazaguanine biosynthesis. Its function is as follows. Catalyzes the ATP-dependent conversion of 7-carboxy-7-deazaguanine (CDG) to 7-cyano-7-deazaguanine (preQ(0)). The protein is 7-cyano-7-deazaguanine synthase of Leptospira interrogans serogroup Icterohaemorrhagiae serovar copenhageni (strain Fiocruz L1-130).